The following is a 132-amino-acid chain: Intraflagellar transport protein 20 homolog (132 aa).

The IFT57-binding stretch occupies residues 70-132 (MKAIGARNLL…EFIDQFIFQK (63 aa)). The stretch at 74–116 (GARNLLKSIAKQREAQQQQLQALIAEKKTQLERYRVEYEALCK) forms a coiled coil.

Component of the IFT complex B, at least composed of IFT20, IFT22, IFT25, IFT27, IFT46, IFT52, TRAF3IP1/IFT54, IFT57, IFT74, IFT80, IFT81, and IFT88. Interacts directly with IFT57 and KIF3B/Kinesin II subunit. Interacts with IFT88. Interacts with CEP83. Interacts with SPEF2 (via C-terminus). Interacts with CBL and CBLB. Interacts with TRIP11. Interacts with TTC21A. Interacts with SPATA1. Interacts with USH1G. Interacts with CCDC146. Interacts with CEP78; regulating IFT20 stability and localization. Expressed predominantly in the testis (at protein level). Expressed in kidney and retina. Expression is up-regulated during spermiogenesis.

It is found in the golgi apparatus. Its subcellular location is the cis-Golgi network. The protein resides in the cytoplasm. The protein localises to the cytoskeleton. It localises to the microtubule organizing center. It is found in the centrosome. Its subcellular location is the centriole. The protein resides in the cilium basal body. The protein localises to the cell projection. It localises to the cilium. It is found in the cytoplasmic vesicle. Its subcellular location is the secretory vesicle. The protein resides in the acrosome. Its function is as follows. Part of intraflagellar transport (IFT) particles involved in ciliary process assembly. May play a role in the trafficking of ciliary membrane proteins from the Golgi complex to the cilium. Regulates the ciliary platelet-derived growth factor receptor-alpha (PDGFRA) signaling pathway. Required for protein stability of E3 ubiquitin ligases CBL and CBLB that mediate ubiquitination and internalization of PDGFRA for proper feedback inhibition of PDGFRA signaling. Essential for male fertility. Plays an important role in spermatogenesis, particularly spermiogenesis, when germ cells form flagella. May play a role in the transport of flagellar proteins ODF2 and SPAG16 to build sperm flagella and in the removal of redundant sperm cytoplasm. Also involved in autophagy since it is required for trafficking of ATG16L and the expansion of the autophagic compartment. In Mus musculus (Mouse), this protein is Intraflagellar transport protein 20 homolog (Ift20).